The chain runs to 167 residues: Caffeine dehydrogenase subunit gamma (167 aa).

One can recognise a 2Fe-2S ferredoxin-type domain in the interval 4–80; that stretch reads HVISLTVNGQ…GHSIRTVEAL (77 aa). [2Fe-2S] cluster contacts are provided by Cys42, Cys47, Cys50, and Cys62.

As to quaternary structure, heterotrimer composed of an alpha (CdhA), a beta (CdhB) and a gamma (CdhC) subunit.

The catalysed reaction is caffeine + a ubiquinone + H2O = 1,3,7-trimethylurate + a ubiquinol. It carries out the reaction ubiquinone-0 + caffeine + H2O = ubiquinol-0 + 1,3,7-trimethylurate. It catalyses the reaction theobromine + a ubiquinone + H2O = 3,7-dimethylurate + a ubiquinol. In terms of biological role, component of the caffeine dehydrogenase complex that catalyzes the hydrolytical oxidation of 1,3,7-trimethylxanthine (caffeine) by incorporation of an oxygen atom originating from a water molecule into position C-8 to produce 1,3,7-trimethyluric acid (TMU). Coenzyme Q0 (ubiquinone-0) is the preferred electron acceptor and, to a lesser extent, coenzyme Q2 (ubiquinone-2) can also be used, but oxygen and NAD(P)(+) cannot. Is involved in a caffeine degradation pathway that allows Pseudomonas sp. strain CBB1 to grow on caffeine as the sole carbon and nitrogen source. Is also active with theobromine as substrate, but shows a very poor activity with theophylline and is not active with xanthine, 3-methylxanthine, 7-methylxanthine, TMU, and 3,7-dimethylurate. The sequence is that of Caffeine dehydrogenase subunit gamma from Pseudomonas sp. (strain CBB1).